Consider the following 519-residue polypeptide: Probable FAD synthase (519 aa).

A molybdenum cofactor biosynthesis protein-like region spans residues 17 to 108 (AILVIGDEIL…TDQMQFSDEI (92 aa)). Residues 328-485 (QIALSFNGGK…SLGGRDNTVK (158 aa)) are FAD synthase.

It in the N-terminal section; belongs to the MoaB/Mog family. The protein in the C-terminal section; belongs to the PAPS reductase family. FAD1 subfamily. It depends on Mg(2+) as a cofactor.

It carries out the reaction FMN + ATP + H(+) = FAD + diphosphate. Its pathway is cofactor biosynthesis; FAD biosynthesis; FAD from FMN: step 1/1. In terms of biological role, catalyzes the adenylation of flavin mononucleotide (FMN) to form flavin adenine dinucleotide (FAD) coenzyme. This is Probable FAD synthase from Caenorhabditis elegans.